Reading from the N-terminus, the 185-residue chain is Ribosome-recycling factor (185 aa).

Belongs to the RRF family.

The protein localises to the cytoplasm. Responsible for the release of ribosomes from messenger RNA at the termination of protein biosynthesis. May increase the efficiency of translation by recycling ribosomes from one round of translation to another. This Campylobacter jejuni (strain RM1221) protein is Ribosome-recycling factor.